A 495-amino-acid polypeptide reads, in one-letter code: Nitrogen fixation regulatory protein (495 aa).

In terms of domain architecture, PAS 1 spans 23 to 93; that stretch reads HPGLFFTMVE…QEMWQTLLQR (71 aa). The region spanning 94-148 is the PAC domain; the sequence is QPWRGQLINQARDGGLYLVDIDITPVLNPQGELEHYLAMQRDISVSYTLEQRLRN. The PAS 2; truncated domain occupies 151-174; it reads TLMEAVLNNIPAAVVVVDEQDRVV.

The cofactor is FAD.

Its function is as follows. Required for the inhibition of NifA activity in response to oxygen and low level of fixed nitrogen. This is Nitrogen fixation regulatory protein (nifL) from Klebsiella pneumoniae.